The chain runs to 386 residues: GTPase Obg (386 aa).

The 159-residue stretch at 4–162 (SNFVDYVKIY…RTVILQLKLL (159 aa)) folds into the Obg domain. Residues 18–44 (KGGRGSSHFRREKYIPKGGPDGGDGGR) are disordered. One can recognise an OBG-type G domain in the interval 163-329 (ADVGLVGFPN…LKDLLWKELN (167 aa)). Residues 169-176 (GFPNAGKS), 194-198 (FTTLE), 216-219 (DIPG), 283-286 (TKSD), and 310-312 (SSI) contribute to the GTP site. The Mg(2+) site is built by Ser-176 and Thr-196. The tract at residues 357 to 386 (YIFPVDEDEDDPDEEYEEYWDDDEDEDTRK) is disordered.

Belongs to the TRAFAC class OBG-HflX-like GTPase superfamily. OBG GTPase family. Monomer. Mg(2+) is required as a cofactor.

The protein resides in the cytoplasm. Functionally, an essential GTPase which binds GTP, GDP and possibly (p)ppGpp with moderate affinity, with high nucleotide exchange rates and a fairly low GTP hydrolysis rate. Plays a role in control of the cell cycle, stress response, ribosome biogenesis and in those bacteria that undergo differentiation, in morphogenesis control. In Parabacteroides distasonis (strain ATCC 8503 / DSM 20701 / CIP 104284 / JCM 5825 / NCTC 11152), this protein is GTPase Obg.